The chain runs to 142 residues: Large ribosomal subunit protein uL11 (142 aa).

This sequence belongs to the universal ribosomal protein uL11 family. Part of the ribosomal stalk of the 50S ribosomal subunit. Interacts with L10 and the large rRNA to form the base of the stalk. L10 forms an elongated spine to which L12 dimers bind in a sequential fashion forming a multimeric L10(L12)X complex. Post-translationally, one or more lysine residues are methylated.

Its function is as follows. Forms part of the ribosomal stalk which helps the ribosome interact with GTP-bound translation factors. This chain is Large ribosomal subunit protein uL11, found in Proteus vulgaris.